We begin with the raw amino-acid sequence, 1488 residues long: Calmodulin binding protein PICBP (1488 aa).

Disordered stretches follow at residues 1 to 31 (MSNP…RKMW), 63 to 112 (TAES…SRIS), 280 to 329 (GPLG…GRSS), and 378 to 414 (HDHD…EEDG). The span at 18-31 (SSRRVHKRRERKMW) shows a compositional bias: basic residues. Residues 76–86 (DDSRTYSKSSD) show a composition bias toward basic and acidic residues. Residues 98–107 (SVKRRAKSKS) show a composition bias toward basic residues. The span at 297 to 312 (DNVDGDSDEEVFEEEV) shows a compositional bias: acidic residues. 2 calmodulin-binding regions span residues 493 to 592 (TFHM…SLIP) and 831 to 938 (NSLK…DIVL). Disordered regions lie at residues 816 to 844 (IPDS…GETK) and 941 to 971 (HDTP…EGCE). Composition is skewed to basic and acidic residues over residues 833 to 844 (LKEEKEHQGETK) and 954 to 971 (RNND…EGCE). The tract at residues 1135-1229 (EKRVKGWNNV…SLLAQAFDTI (95 aa)) is calmodulin-binding. Disordered regions lie at residues 1232–1252 (QDMG…ISRQ) and 1316–1340 (EKNQ…DTSV). Residues 1235-1252 (GSGSTPGSAASSRNISRQ) show a composition bias toward low complexity. The span at 1316–1328 (EKNQTLPEETRKE) shows a compositional bias: basic and acidic residues. A calmodulin-binding region spans residues 1379 to 1483 (RQKSETLQVS…QLLVQAFESL (105 aa)).

Its function is as follows. Binds calmodulin in a calcium-dependent manner in vitro. May play a role in general plant defense including R gene-mediated responses. The chain is Calmodulin binding protein PICBP from Arabidopsis thaliana (Mouse-ear cress).